The primary structure comprises 294 residues: Putative cuticle collagen 145 (294 aa).

Residues 1 to 30 (MEKILVTFSTGAASIAVLAVLFTVPSLYNT) form the signal peptide. Pro residues predominate over residues 100–112 (TCPPGPPGPPGQP). Disordered regions lie at residues 100-133 (TCPP…ATFA) and 148-276 (PQGP…LPGN). Triple-helical region stretches follow at residues 102 to 127 (PPGP…KGDD) and 148 to 277 (PQGP…PGND). Low complexity-rich tracts occupy residues 164 to 194 (AGPD…NGQP) and 219 to 265 (APGA…DGQP). Positions 218–276 (GAPGAPGNAGPAGPAGQDGFPGQDGAPGPAGPAGQDGFPGNAGSDGQPGAPGGPGLPGN) constitute a Collagen-like domain.

It belongs to the cuticular collagen family. In terms of assembly, collagen polypeptide chains are complexed within the cuticle by disulfide bonds and other types of covalent cross-links.

Its function is as follows. Nematode cuticles are composed largely of collagen-like proteins. The cuticle functions both as an exoskeleton and as a barrier to protect the worm from its environment. This Caenorhabditis elegans protein is Putative cuticle collagen 145 (col-145).